The sequence spans 277 residues: Undecaprenyl-diphosphatase (277 aa).

Helical transmembrane passes span Ile3–Pro23, Ala44–Trp64, Gln82–Gly102, Leu109–Ala129, Thr189–Phe209, Ala218–Ile238, and Phe253–Val273.

This sequence belongs to the UppP family.

It localises to the cell inner membrane. It carries out the reaction di-trans,octa-cis-undecaprenyl diphosphate + H2O = di-trans,octa-cis-undecaprenyl phosphate + phosphate + H(+). Its function is as follows. Catalyzes the dephosphorylation of undecaprenyl diphosphate (UPP). Confers resistance to bacitracin. The sequence is that of Undecaprenyl-diphosphatase from Polaromonas naphthalenivorans (strain CJ2).